Consider the following 177-residue polypeptide: Nucleoside triphosphate/diphosphate phosphatase (177 aa).

Arginine 23 functions as the Proton donor in the catalytic mechanism. 6 residues coordinate Mg(2+): asparagine 87, aspartate 103, aspartate 105, aspartate 107, aspartate 120, and glutamate 123.

The protein belongs to the Ntdp family. Mg(2+) is required as a cofactor.

The enzyme catalyses a ribonucleoside 5'-triphosphate + H2O = a ribonucleoside 5'-diphosphate + phosphate + H(+). The catalysed reaction is a ribonucleoside 5'-diphosphate + H2O = a ribonucleoside 5'-phosphate + phosphate + H(+). Functionally, has nucleoside phosphatase activity towards nucleoside triphosphates and nucleoside diphosphates. This is Nucleoside triphosphate/diphosphate phosphatase from Streptococcus suis (strain 98HAH33).